The primary structure comprises 220 residues: Putative O-methyltransferase Mmcs_3995 (220 aa).

S-adenosyl-L-methionine is bound by residues Val47, Glu69, 71-72, Ser77, Asp95, and Val96; that span reads GT. Asp143 contacts substrate. Asp145 contributes to the S-adenosyl-L-methionine binding site.

Belongs to the class I-like SAM-binding methyltransferase superfamily. Cation-dependent O-methyltransferase family.

The chain is Putative O-methyltransferase Mmcs_3995 from Mycobacterium sp. (strain MCS).